The sequence spans 46 residues: DNA-directed RNA polymerase subunit Rpo12 (46 aa).

Zn(2+) contacts are provided by Cys9, Cys24, and Cys27.

It belongs to the archaeal Rpo12/eukaryotic RPC10 RNA polymerase subunit family. As to quaternary structure, part of the RNA polymerase complex. Interacts with Rpo3. Forms an Rpo3-Rpo10-Rpo11-Rpo12 complex upon coexpression. The cofactor is Zn(2+).

Its subcellular location is the cytoplasm. It catalyses the reaction RNA(n) + a ribonucleoside 5'-triphosphate = RNA(n+1) + diphosphate. In terms of biological role, DNA-dependent RNA polymerase (RNAP) catalyzes the transcription of DNA into RNA using the four ribonucleoside triphosphates as substrates. In Methanocaldococcus jannaschii (strain ATCC 43067 / DSM 2661 / JAL-1 / JCM 10045 / NBRC 100440) (Methanococcus jannaschii), this protein is DNA-directed RNA polymerase subunit Rpo12.